The sequence spans 342 residues: Elongation factor Ts (342 aa).

Residues Thr-79 to Val-82 are involved in Mg(2+) ion dislocation from EF-Tu.

It belongs to the EF-Ts family.

It is found in the cytoplasm. Functionally, associates with the EF-Tu.GDP complex and induces the exchange of GDP to GTP. It remains bound to the aminoacyl-tRNA.EF-Tu.GTP complex up to the GTP hydrolysis stage on the ribosome. This Lactococcus lactis subsp. lactis (strain IL1403) (Streptococcus lactis) protein is Elongation factor Ts (tsf).